The chain runs to 32 residues: MSDIN-like toxin proprotein 2 (32 aa).

Positions 1–10 (MSDINATRLP) are excised as a propeptide. A cross-link (cyclopeptide (His-Pro)) is located at residues 11–17 (HLVRYPP). Positions 18–32 (YVGDGTDLTLNRGEK) are excised as a propeptide.

It belongs to the MSDIN fungal toxin family. Post-translationally, processed by the macrocyclase-peptidase enzyme POPB to yield a toxic cyclic heptapeptide. POPB first removes 10 residues from the N-terminus. Conformational trapping of the remaining peptide forces the enzyme to release this intermediate rather than proceed to macrocyclization. The enzyme rebinds the remaining peptide in a different conformation and catalyzes macrocyclization of the N-terminal 7 residues.

Probable toxin that belongs to the MSDIN-like toxin family responsible for a large number of food poisoning cases and deaths. This Amanita fuligineoides protein is MSDIN-like toxin proprotein 2.